We begin with the raw amino-acid sequence, 362 residues long: 3-dehydroquinate synthase (362 aa).

NAD(+) contacts are provided by residues D71–K76, G105–D109, T129–T130, K142, and K151. Residues E184, H247, and H264 each coordinate Zn(2+).

Belongs to the sugar phosphate cyclases superfamily. Dehydroquinate synthase family. Requires NAD(+) as cofactor. Co(2+) serves as cofactor. It depends on Zn(2+) as a cofactor.

It is found in the cytoplasm. The catalysed reaction is 7-phospho-2-dehydro-3-deoxy-D-arabino-heptonate = 3-dehydroquinate + phosphate. The protein operates within metabolic intermediate biosynthesis; chorismate biosynthesis; chorismate from D-erythrose 4-phosphate and phosphoenolpyruvate: step 2/7. Functionally, catalyzes the conversion of 3-deoxy-D-arabino-heptulosonate 7-phosphate (DAHP) to dehydroquinate (DHQ). The chain is 3-dehydroquinate synthase from Haemophilus ducreyi (strain 35000HP / ATCC 700724).